The sequence spans 397 residues: Elongation factor Tu (397 aa).

A tr-type G domain is found at 10–206 (KPHVNIGTIG…AVDTSIPQPE (197 aa)). Positions 19-26 (GHIDHGKT) are G1. 19-26 (GHIDHGKT) contacts GTP. Threonine 26 provides a ligand contact to Mg(2+). The tract at residues 62 to 66 (GITIS) is G2. The interval 83–86 (DCPG) is G3. Residues 83-87 (DCPGH) and 138-141 (NKSD) each bind GTP. The interval 138-141 (NKSD) is G4. Positions 176-178 (SAL) are G5.

This sequence belongs to the TRAFAC class translation factor GTPase superfamily. Classic translation factor GTPase family. EF-Tu/EF-1A subfamily. In terms of assembly, monomer.

The protein localises to the cytoplasm. The enzyme catalyses GTP + H2O = GDP + phosphate + H(+). Functionally, GTP hydrolase that promotes the GTP-dependent binding of aminoacyl-tRNA to the A-site of ribosomes during protein biosynthesis. The chain is Elongation factor Tu from Salinispora arenicola (strain CNS-205).